The chain runs to 367 residues: Alanine racemase (367 aa).

Residue K40 is the Proton acceptor; specific for D-alanine of the active site. K40 is subject to N6-(pyridoxal phosphate)lysine. A substrate-binding site is contributed by R136. The active-site Proton acceptor; specific for L-alanine is Y263. M310 is a binding site for substrate.

This sequence belongs to the alanine racemase family. Pyridoxal 5'-phosphate is required as a cofactor.

The enzyme catalyses L-alanine = D-alanine. The protein operates within amino-acid biosynthesis; D-alanine biosynthesis; D-alanine from L-alanine: step 1/1. Catalyzes the interconversion of L-alanine and D-alanine. May also act on other amino acids. In Lactococcus lactis subsp. lactis (strain IL1403) (Streptococcus lactis), this protein is Alanine racemase (alr).